A 206-amino-acid polypeptide reads, in one-letter code: Smr domain-containing protein C11H11.03c (206 aa).

The 76-residue stretch at 75–150 folds into the Smr domain; it reads IDLHGLYIDE…NEGRIYVYLP (76 aa).

Its subcellular location is the cytoplasm. It localises to the nucleus. This is Smr domain-containing protein C11H11.03c from Schizosaccharomyces pombe (strain 972 / ATCC 24843) (Fission yeast).